Consider the following 158-residue polypeptide: Ribosomal RNA large subunit methyltransferase H (158 aa).

Residues leucine 76, glycine 107, and 126-131 each bind S-adenosyl-L-methionine; that span reads LSGLTM.

It belongs to the RNA methyltransferase RlmH family. As to quaternary structure, homodimer.

The protein resides in the cytoplasm. It catalyses the reaction pseudouridine(1915) in 23S rRNA + S-adenosyl-L-methionine = N(3)-methylpseudouridine(1915) in 23S rRNA + S-adenosyl-L-homocysteine + H(+). In terms of biological role, specifically methylates the pseudouridine at position 1915 (m3Psi1915) in 23S rRNA. This is Ribosomal RNA large subunit methyltransferase H from Teredinibacter turnerae (strain ATCC 39867 / T7901).